Here is a 100-residue protein sequence, read N- to C-terminus: uncharacterized protein (100 aa).

The segment at 78 to 100 (NNGNLDFKGRADERRQPVSNLRM) is disordered. Positions 84–93 (FKGRADERRQ) are enriched in basic and acidic residues.

This is an uncharacterized protein from Saccharomyces cerevisiae (strain ATCC 204508 / S288c) (Baker's yeast).